The chain runs to 406 residues: Tyrosine--tRNA ligase (406 aa).

Y35 is an L-tyrosine binding site. A 'HIGH' region motif is present at residues 40-49 (PTADSLHIGH). L-tyrosine is bound by residues Y168 and Q172. The 'KMSKS' region signature appears at 228–232 (KMGKT). An ATP-binding site is contributed by K231. The S4 RNA-binding domain occupies 340 to 406 (CSVVELLVDI…KKNYNRIIIK (67 aa)).

This sequence belongs to the class-I aminoacyl-tRNA synthetase family. TyrS type 1 subfamily. In terms of assembly, homodimer.

It is found in the cytoplasm. It catalyses the reaction tRNA(Tyr) + L-tyrosine + ATP = L-tyrosyl-tRNA(Tyr) + AMP + diphosphate + H(+). Its function is as follows. Catalyzes the attachment of tyrosine to tRNA(Tyr) in a two-step reaction: tyrosine is first activated by ATP to form Tyr-AMP and then transferred to the acceptor end of tRNA(Tyr). This is Tyrosine--tRNA ligase from Clostridium kluyveri (strain NBRC 12016).